Consider the following 587-residue polypeptide: Probable intramembrane protease YKL100C (587 aa).

The Lumenal portion of the chain corresponds to 1–85 (MDKYLNSFVD…HSLVFNYATL (85 aa)). A helical membrane pass occupies residues 86–106 (VLIASALVVIGSFTSISSIPF). Topologically, residues 107–156 (TALPPTREHSLFDPTDFDVDHDCHVIYRENDEDKKKKKKSKRFFDMMDEK) are cytoplasmic. Residues 157–177 (HAIILPLTSGCTLLALYFVIK) form a helical membrane-spanning segment. Over 178–192 (KLHLNWLKYVVKILN) the chain is Lumenal. Residues 193–213 (FNITLLNIPAGTFVYSYFLNS) form a helical membrane-spanning segment. Residues 214 to 303 (LFRNLSHLAS…KSKRQISNMY (90 aa)) are Cytoplasmic-facing. The helical transmembrane segment at 304–324 (LNSALIVSFVLSIVSTVYFYL) threads the bilayer. Residues 325–328 (SPND) lie on the Lumenal side of the membrane. The chain crosses the membrane as a helical span at residues 329-349 (WLISNAVSMNMAIWSIAQLKL). Topologically, residues 350–351 (KN) are cytoplasmic. The chain crosses the membrane as a helical span at residues 352 to 372 (LKSGALILIALFFYDICFVFG). Residue Asp-366 is part of the active site. At 373-401 (TDVMVTVATNLDIPVKLSLPVKFNTAQNN) the chain is on the lumenal side. Residues 402 to 422 (FNFSILGLGDIALPGMFIAMC) form a helical membrane-spanning segment. Residue Asp-411 is part of the active site. Residues 423 to 450 (YKYDIWKWHLDHDDTEFHFLNWSYVGKY) lie on the Cytoplasmic side of the membrane. Residues 451 to 471 (FITAMVSYVASLVSAMVSLSI) traverse the membrane as a helical segment. Residues 472–475 (FNTA) lie on the Lumenal side of the membrane. Residues 476–496 (QPALLYIVPSLLISTILVACW) form a helical membrane-spanning segment. Residues 477–479 (PAL) carry the PAL motif. At 497–587 (NKDFKQFWNF…EEDLLDDESS (91 aa)) the chain is on the cytoplasmic side. Residues 561 to 587 (EFVQEEDLSDSSEEELSEEDLLDDESS) are disordered.

Belongs to the peptidase A22B family.

The protein localises to the membrane. It is found in the endoplasmic reticulum membrane. Its function is as follows. May act as intramembrane protease. The polypeptide is Probable intramembrane protease YKL100C (Saccharomyces cerevisiae (strain ATCC 204508 / S288c) (Baker's yeast)).